The chain runs to 218 residues: Small ribosomal subunit protein mS34 (218 aa).

This sequence belongs to the mitochondrion-specific ribosomal protein mS34 family. Component of the mitochondrial ribosome small subunit (28S) which comprises a 12S rRNA and about 30 distinct proteins. In terms of tissue distribution, widely expressed (at protein liver).

The protein localises to the mitochondrion. In terms of biological role, required for mitochondrial translation, plays a role in maintaining the stability of the small ribosomal subunit and the 12S rRNA that are required for mitoribosome formation. This Mus musculus (Mouse) protein is Small ribosomal subunit protein mS34 (Mrps34).